Here is a 267-residue protein sequence, read N- to C-terminus: Indole-3-glycerol phosphate synthase (267 aa).

It belongs to the TrpC family.

The catalysed reaction is 1-(2-carboxyphenylamino)-1-deoxy-D-ribulose 5-phosphate + H(+) = (1S,2R)-1-C-(indol-3-yl)glycerol 3-phosphate + CO2 + H2O. The protein operates within amino-acid biosynthesis; L-tryptophan biosynthesis; L-tryptophan from chorismate: step 4/5. This is Indole-3-glycerol phosphate synthase from Delftia acidovorans (strain DSM 14801 / SPH-1).